Consider the following 324-residue polypeptide: Lactonase drp35 (324 aa).

E47, S109, G111, D129, T132, Y134, D137, N184, D235, and S236 together coordinate Ca(2+). D235 (proton donor) is an active-site residue.

Belongs to the SMP-30/CGR1 family. Ca(2+) serves as cofactor.

It localises to the cytoplasm. Its function is as follows. Exhibits lactonase activity. Acts in cells with perturbed membrane integrity and is possibly related to the membrane homeostasis. This is Lactonase drp35 (drp35) from Staphylococcus aureus (strain MW2).